The primary structure comprises 332 residues: Anthranilate phosphoribosyltransferase (332 aa).

5-phospho-alpha-D-ribose 1-diphosphate-binding positions include glycine 79, 82–83, serine 87, 89–92, 107–115, and serine 119; these read GD, NIST, and KHGNRSVSS. Glycine 79 is a binding site for anthranilate. Residue serine 91 coordinates Mg(2+). Residue asparagine 110 coordinates anthranilate. An anthranilate-binding site is contributed by arginine 165. Aspartate 223 and glutamate 224 together coordinate Mg(2+).

This sequence belongs to the anthranilate phosphoribosyltransferase family. In terms of assembly, homodimer. Mg(2+) serves as cofactor.

It catalyses the reaction N-(5-phospho-beta-D-ribosyl)anthranilate + diphosphate = 5-phospho-alpha-D-ribose 1-diphosphate + anthranilate. It functions in the pathway amino-acid biosynthesis; L-tryptophan biosynthesis; L-tryptophan from chorismate: step 2/5. In terms of biological role, catalyzes the transfer of the phosphoribosyl group of 5-phosphorylribose-1-pyrophosphate (PRPP) to anthranilate to yield N-(5'-phosphoribosyl)-anthranilate (PRA). This chain is Anthranilate phosphoribosyltransferase, found in Yersinia pestis bv. Antiqua (strain Antiqua).